The sequence spans 1382 residues: MEVLMAERADLVFHNKVIDATAMKRLISRLIDHFGMAYTSHILDQVKTLGFQQATATSISLGIDDLLTIPSKGWLVQDAEQQSLILEKHHHYGNVHAVEKLRQSIEIWYATSEYLRQEMHPNFRMTDPSNPVHIMSFSGARGNASQVHQLVGMRGLMSDPQGQMIDLPIQSNLREGLSLTEYIISCYGARKGVVDTAVRTSDAGYLTRRLVEVVQHIVVRRTDCGTIRGISVSPRNGMTEKILIQTLIGRVLADDIYMGLRCIATRNQDIGIGLVNRFITFRAQSIYIRTPFICRSTSWICRLCYGRSPTHGDLVELGEAVGIIAGQSIGEPGTQLTLRTFHTGGVFTGGTAEHVRAPSNGKIKFNECLVHPTRTRHGHPAFLCYIDLYVTIESQDIIHNVNIPPKSFLLVQNDQYVESEQVIAEIRAGTSTFNFKERVRKHIYSDSEGEMHWSTDVYHAPEYRYGNVHLLPKTSHLWILSGGPCRSSIVPFSLHKDQDQMNVHSLSVERRYISDLSVTNDRVRHKLFSSDPSGKKKERILDYSGPDRIVSNGHWNFLYPAILHENSDLLAKRRRNRFIIPFQYDQEREKELMPRSGISIEIPINGILRRDTILAYFDDPRYRRSSSGITKYGTIEVDSIVKKEDLIEYRGAKEFRPKYQMKVDRFFFIPEEVHILPGSSPIMVRNNSIIGVDTRIALNTRSRVGGLVRVERKKKKIELKIFSGDIHFPGETDKISRHSGILIPPGTGKKNSKESKKWKNWIYVQRITPTKKKYFVSVRPVVTYEIADGINLGTLFPQDLLQERDNVQLRVVNYILYGNGKPIRGIYHTSIQLVRTCLVLNWDQDRNGSIEEVHASFVEVGTNDLIRDFIRIDLVKSPISYIGKRDDTTGSGLIPDNESDRTNINTFYSKTRIQSLTQHQGTIRTFLNRNKECQSFLILSSSDCSRIGPFNGSKSHKVTKESIKEDPMIPIRNSLGPLGTVPKIANFYSSYYLITHNQILLNKYLLLDNLKQTFQVLKYYLMDENGRIYNPNLHSNIIFNPFDLNWCFLRHDYCEETSTIISLGQFICENVCISKYGPHIKSGQVLIVHVDSLVIRSAKPHLATPGATVHGHYGEILSEGDTLVTFIYEKSRSGDITQGLPKVEQVLEVRSIDSISMNLEKRIEGWNEHITRILGIPWGFLIGAELTIAQSRISLVNKIQKVYRSQGVQIHNRHIEIIVRQITSKVLVSEDGMSNVFSPGELIGLLRAERTGRALEEGICYRAILLGITRASLNTQSFISEASFQETARVLAKAALRGRIDWLKGLKENVVLGGMIPVGTGFKGLVHRSRQHNNIPLEIKKKNLFEGEMRDILFHHRELLSSCIPKNFHDTSEQSFTGFNDS.

Zn(2+) contacts are provided by Cys-224, Cys-294, Cys-301, and Cys-304.

It belongs to the RNA polymerase beta' chain family. RpoC2 subfamily. In terms of assembly, in plastids the minimal PEP RNA polymerase catalytic core is composed of four subunits: alpha, beta, beta', and beta''. When a (nuclear-encoded) sigma factor is associated with the core the holoenzyme is formed, which can initiate transcription. It depends on Zn(2+) as a cofactor.

The protein resides in the plastid. The protein localises to the chloroplast. It carries out the reaction RNA(n) + a ribonucleoside 5'-triphosphate = RNA(n+1) + diphosphate. Functionally, DNA-dependent RNA polymerase catalyzes the transcription of DNA into RNA using the four ribonucleoside triphosphates as substrates. The sequence is that of DNA-directed RNA polymerase subunit beta'' from Liriodendron tulipifera (Tuliptree).